The primary structure comprises 643 residues: Protein disulfide-isomerase A4 (643 aa).

The signal sequence occupies residues 1–20 (MRPRKAWMLVLLLALVQLLA). 2 consecutive Thioredoxin domains span residues 21–168 (VASA…EVSQ) and 170–300 (NWTP…EFLK). Residues 24–54 (AGAPDEDSTDKEDAIEEDEEEDEDDDDDDDD) form a disordered region. Residues 27–54 (PDEDSTDKEDAIEEDEEEDEDDDDDDDD) are compositionally biased toward acidic residues. The CXXC signature appears at 90 to 93 (CGHC). 2 disulfides stabilise this stretch: Cys90–Cys93 and Cys205–Cys208. An N6-acetyllysine modification is found at Lys365. In terms of domain architecture, Thioredoxin 3 spans 503-634 (FKKGKLKPVI…LSKFIEEHAT (132 aa)). A CXXC motif is present at residues 553-556 (CGHC). A disulfide bridge connects residues Cys553 and Cys556. The Prevents secretion from ER signature appears at 640–643 (KEEL).

This sequence belongs to the protein disulfide isomerase family. Part of a large chaperone multiprotein complex comprising DNAJB11, HSP90B1, HSPA5, HYOU, PDIA2, PDIA4, PDIA6, PPIB, SDF2L1, UGGT1 and very small amounts of ERP29, but not, or at very low levels, CALR nor CANX. Component of a complex containing at least CRELD2, MANF, MATN3 and PDIA4.

The protein localises to the endoplasmic reticulum lumen. It localises to the melanosome. It carries out the reaction Catalyzes the rearrangement of -S-S- bonds in proteins.. This is Protein disulfide-isomerase A4 (PDIA4) from Bos taurus (Bovine).